A 168-amino-acid chain; its full sequence is 2-C-methyl-D-erythritol 2,4-cyclodiphosphate synthase (168 aa).

Residues Asp13 and His15 each contribute to the a divalent metal cation site. 4-CDP-2-C-methyl-D-erythritol 2-phosphate contacts are provided by residues Asp13–His15 and His39–Ser40. A divalent metal cation is bound at residue His47. 4-CDP-2-C-methyl-D-erythritol 2-phosphate contacts are provided by residues Asp61 to Gly63, Phe66 to Asp70, Phe144, and Lys147.

Belongs to the IspF family. As to quaternary structure, homotrimer. A divalent metal cation is required as a cofactor.

The catalysed reaction is 4-CDP-2-C-methyl-D-erythritol 2-phosphate = 2-C-methyl-D-erythritol 2,4-cyclic diphosphate + CMP. It participates in isoprenoid biosynthesis; isopentenyl diphosphate biosynthesis via DXP pathway; isopentenyl diphosphate from 1-deoxy-D-xylulose 5-phosphate: step 4/6. Involved in the biosynthesis of isopentenyl diphosphate (IPP) and dimethylallyl diphosphate (DMAPP), two major building blocks of isoprenoid compounds. Catalyzes the conversion of 4-diphosphocytidyl-2-C-methyl-D-erythritol 2-phosphate (CDP-ME2P) to 2-C-methyl-D-erythritol 2,4-cyclodiphosphate (ME-CPP) with a corresponding release of cytidine 5-monophosphate (CMP). This is 2-C-methyl-D-erythritol 2,4-cyclodiphosphate synthase from Ralstonia pickettii (strain 12J).